The following is a 367-amino-acid chain: Histidinol-phosphate aminotransferase (367 aa).

Lys-222 is modified (N6-(pyridoxal phosphate)lysine).

The protein belongs to the class-II pyridoxal-phosphate-dependent aminotransferase family. Histidinol-phosphate aminotransferase subfamily. It depends on pyridoxal 5'-phosphate as a cofactor.

It carries out the reaction L-histidinol phosphate + 2-oxoglutarate = 3-(imidazol-4-yl)-2-oxopropyl phosphate + L-glutamate. It participates in amino-acid biosynthesis; L-histidine biosynthesis; L-histidine from 5-phospho-alpha-D-ribose 1-diphosphate: step 7/9. This Methanosphaera stadtmanae (strain ATCC 43021 / DSM 3091 / JCM 11832 / MCB-3) protein is Histidinol-phosphate aminotransferase.